The chain runs to 187 residues: Probable GTP-binding protein EngB (187 aa).

Positions 18–187 (KNSEIAFWGR…KLKENINSNF (170 aa)) constitute an EngB-type G domain. GTP is bound by residues 26-33 (GRSNVGKS), 52-56 (GRTQL), 70-73 (DLPG), 137-140 (TKID), and 168-170 (VSS). Residues S33 and T54 each coordinate Mg(2+).

This sequence belongs to the TRAFAC class TrmE-Era-EngA-EngB-Septin-like GTPase superfamily. EngB GTPase family. It depends on Mg(2+) as a cofactor.

Functionally, necessary for normal cell division and for the maintenance of normal septation. The sequence is that of Probable GTP-binding protein EngB from Mycoplasmopsis synoviae (strain 53) (Mycoplasma synoviae).